The primary structure comprises 163 residues: UPF0416 protein RBE_0909 (163 aa).

It belongs to the UPF0416 family.

The polypeptide is UPF0416 protein RBE_0909 (Rickettsia bellii (strain RML369-C)).